The sequence spans 517 residues: Protein IQ-DOMAIN 13 (517 aa).

Residues 1–11 (MGKKGSWFSAI) are calmodulin-binding. 2 disordered regions span residues 1–60 (MGKK…FLPI) and 81–147 (VFRP…PRAV). Residues 40–49 (KKKKGFGKKL) show a composition bias toward basic residues. Residues 89–99 (DRANSSSTSVA) are compositionally biased toward polar residues. Positions 134–144 (PKPPSPKPPSP) are enriched in pro residues. IQ domains are found at residues 168-196 (KNAY…GLVR) and 197-218 (LQGV…KYMQ). Disordered regions lie at residues 324-407 (QPFR…LTSC) and 425-452 (KLRA…SSFP). Residues 328–342 (LTPTRPSLSPQPQSS) show a composition bias toward low complexity. The segment covering 343–367 (NQNHFRLNNSFDTSTPNSSKSTFVT) has biased composition (polar residues). The segment covering 432–448 (PKERMDRTPVSTNEKRR) has biased composition (basic and acidic residues).

The protein belongs to the IQD family. Binds to multiple calmodulin (CaM) in the presence of Ca(2+) and CaM-like proteins. Expressed in vessels of roots, cotyledons and leaves, as well as in trichomes.

It is found in the cell membrane. The protein resides in the cytoplasm. Its subcellular location is the cytoskeleton. In terms of biological role, may be involved in cooperative interactions with calmodulins or calmodulin-like proteins. Recruits calmodulin proteins to microtubules, thus being a potential scaffold in cellular signaling and trafficking. Regulates the formation of oval xylem secondary cell-wall deposition pits through microtubule-dependent lateral inhibition of Rho GTPase domains, thus confining the area of active ROP domains within the lattice of the cortical microtubules. May associate with nucleic acids and regulate gene expression at the transcriptional or post-transcriptional level. This is Protein IQ-DOMAIN 13 from Arabidopsis thaliana (Mouse-ear cress).